The following is a 219-amino-acid chain: Elongation factor Ts, chloroplastic (219 aa).

The protein belongs to the EF-Ts family.

Its subcellular location is the plastid. The protein localises to the chloroplast. Its function is as follows. Associates with the EF-Tu.GDP complex and induces the exchange of GDP to GTP. It remains bound to the aminoacyl-tRNA.EF-Tu.GTP complex up to the GTP hydrolysis stage on the ribosome. This Rhodomonas salina (Cryptomonas salina) protein is Elongation factor Ts, chloroplastic (tsf).